A 171-amino-acid chain; its full sequence is LIM domain transcription factor LMO4-A (171 aa).

Polar residues predominate over residues 1–19 (MVNNRSSESTTTAVSSNGS). Residues 1-21 (MVNNRSSESTTTAVSSNGSPP) are disordered. LIM zinc-binding domains lie at 22–84 (KACA…LFGN) and 86–148 (GACN…GLLN).

In terms of tissue distribution, at the start of gastrulation (stage 10), expressed in the mesodermal marginal zone. Shortly after (stage 11), expression is down-regulated in the dorsal most region. During neurulation, expressed in the neural plate and ventral epidermis. At late neurula stages, also expressed more rostrally, and then in the brain, migrating neural crests and ventral epidermis.

Functionally, acts as a positive cofactor of GATA transcription factors to establish the identity of the ventral mesoderm during gastrulation. Down-regulation in the dorsal mesoderm is necessary for the proper formation of this territory since, when present, lmo4 may bind ldb1 and restrict the availability of this cofactor for Spemman organizer transcription factors. At neurula stages, suppresses primary neuron differentiation and modulates gene expression at the Isthmic Organizer of the midbrain-hindbrain boundary. The polypeptide is LIM domain transcription factor LMO4-A (lmo4-a) (Xenopus laevis (African clawed frog)).